A 197-amino-acid polypeptide reads, in one-letter code: uncharacterized protein (197 aa).

An N-terminal signal peptide occupies residues 1–23; that stretch reads MSARAPKELRLALPPCLLNRTFA. N-linked (GlcNAc...) asparagine glycans are attached at residues Asn19 and Asn26. The Extracellular segment spans residues 24–61; that stretch reads SPNASGSGNTGARGPGAGGSGTCITQVGQQLFQSFSST. Residues 62 to 82 form a helical membrane-spanning segment; it reads LVLIVLVTLIFCLIVLSLSTF. At 83 to 197 the chain is on the cytoplasmic side; that stretch reads HIHKRRMKKR…EGLLQTVVLS (115 aa). The disordered stretch occupies residues 94–180; that stretch reads MQRAQEEYER…SSPQGAHAAS (87 aa). Basic and acidic residues-rich tracts occupy residues 96-107 and 125-136; these read RAQEEYERDHCS and HTKETRLERQPR. The span at 147–161 shows a compositional bias: low complexity; the sequence is SSSSSSSPGLLCQGP. Pro residues predominate over residues 162 to 171; the sequence is CAPPPPPPAS.

The protein resides in the membrane. This is an uncharacterized protein from Macaca fascicularis (Crab-eating macaque).